Here is a 497-residue protein sequence, read N- to C-terminus: MLVKVFSFFILMIIMVIGVSKEYCDDKQSCQNLLLELKAGSSSLSEIRRRDLLIIVLKNSVRRIDMAMIGVMDDTKQHEEMENDMLGVKEDTNLFEEMMESEENSHTWLSSVLTSYITCIDEIGEGAYKRRVEPKLENLISRARVVLALFISISLRDNTELISVIPNGPSWLFHVDKKDLYLNAEIADVVVAKDGTGKYSTVNAAIAAAPQHSQKRFVIYIKTGIYDEIVVIENTKPNLTLIGDGQDLTIITGNLSASNVRRTYNTATVASNGNGFIGVDMCFRNTAGPAKGPAVALRVSGDMSVIYRCRVEGYQDALYPHSDRQFYRECFITGTVDFICGNAVAVFQFCQIVARQPKMGQSNVITAQSRATKDVKSGFSIQNCNITTSSDLDTATVKTYLGRPWRRFSTVAVLQSFIGDLVDPAGWTPWKGETGLSTLHYREYQNRGPGAVTSRRVKWSGFKVMKDPKKATEFTVAKLLDGETWLKESRIPYESGL.

An N-terminal signal peptide occupies residues 1-21 (MLVKVFSFFILMIIMVIGVSK). N-linked (GlcNAc...) asparagine glycosylation is found at asparagine 238 and asparagine 254. Substrate is bound at residue threonine 263. Aspartate 316 (proton donor) is an active-site residue. Cysteines 330 and 350 form a disulfide. The Nucleophile role is filled by aspartate 337. N-linked (GlcNAc...) asparagine glycosylation occurs at asparagine 385. Arginine 403 and tryptophan 405 together coordinate substrate.

The protein belongs to the pectinesterase family. Expressed in siliques.

It localises to the secreted. It is found in the cell wall. The catalysed reaction is [(1-&gt;4)-alpha-D-galacturonosyl methyl ester](n) + n H2O = [(1-&gt;4)-alpha-D-galacturonosyl](n) + n methanol + n H(+). Its pathway is glycan metabolism; pectin degradation; 2-dehydro-3-deoxy-D-gluconate from pectin: step 1/5. Acts in the modification of cell walls via demethylesterification of cell wall pectin. The chain is Probable pectinesterase 30 (PME30) from Arabidopsis thaliana (Mouse-ear cress).